Consider the following 1378-residue polypeptide: Protein CLASP-1 (1378 aa).

The HEAT 1 repeat unit spans residues 168-206; that stretch reads LIPQLCRLTNDPNSEVRDVSTQCLIDLMVYGGKPIVAKI. Disordered regions lie at residues 231 to 254, 266 to 325, and 590 to 725; these read RGDL…RNSL, IHPS…TRSS, and MLRD…HQTP. Low complexity-rich tracts occupy residues 269-283 and 610-619; these read SAST…RLST and NQKQQPNQQN. 2 stretches are compositionally biased toward polar residues: residues 620–630 and 637–648; these read ISQKFLSQRSA and IQLSVKPQTTAI. Over residues 664–676 the composition is skewed to low complexity; that stretch reads SSTSTSFSAVRSS. Residues 677-690 are compositionally biased toward polar residues; sequence GYGQNQSTTPNRAK. Low complexity predominate over residues 704–721; that stretch reads TNGNNNNKSSSSSPSTST. A coiled-coil region spans residues 740–767; it reads ASLTQEQANCLQNAMNTAKDEMSKNNED. Residues 775–784 show a composition bias toward basic and acidic residues; that stretch reads IRKTPPKEVP. Residues 775 to 823 form a disordered region; sequence IRKTPPKEVPRSYNNSPFKPSNLDSSVHRSYNNNSPFRPSSGSVGSGSN. Polar residues predominate over residues 786-812; it reads SYNNSPFKPSNLDSSVHRSYNNNSPFR. The stretch at 1305–1341 is one HEAT 2 repeat; the sequence is HLIVNDVAPCFVTAYESMSSTVRKCAVFGLVALVQRV.

This sequence belongs to the CLASP family.

The protein resides in the cytoplasm. It localises to the cytoskeleton. In terms of biological role, microtubule plus-end tracking protein that promotes the stabilization of dynamic microtubules. Operates redundantly with cls-2 and cls-3 in regulating microtubule processes which position the spindle during asymmetric cell division. This is Protein CLASP-1 (cls-1) from Caenorhabditis elegans.